We begin with the raw amino-acid sequence, 221 residues long: MGLFGKTQEKPPKDLINEWSLKIRKEMRVIDRQIRDIQREEEKVKRSIKDAAKKGQKDVCIILAKEMIQSKRAINKLYASKAQMNSVLLSMKNQLSVLRVAGALQKSTEVMKAMQSLVKIPEIQATMRDLSKEMMKAGIIEEMLEDTLEGMDDEEEMEEAAEAEVDKILFEITAGALGKAPSKVTDLPDPVAIGATAAPEEESEEEEEIEEMQSRLAALRS.

Gly2 is lipidated: N-myristoyl glycine. The stretch at 22–54 (KIRKEMRVIDRQIRDIQREEEKVKRSIKDAAKK) forms a coiled coil. Important for autoinhibitory function stretches follow at residues 59-64 (VCIILA) and 168-169 (IL). A coiled-coil region spans residues 144–221 (LEDTLEGMDD…MQSRLAALRS (78 aa)). Residues 181 to 221 (PSKVTDLPDPVAIGATAAPEEESEEEEEIEEMQSRLAALRS) form a disordered region. Residues 199–211 (PEEESEEEEEIEE) are compositionally biased toward acidic residues. The short motif at 200 to 210 (EEESEEEEEIE) is the MIT-interacting motif element. Interaction with STAMBP regions lie at residues 202–206 (ESEEE) and 220–221 (RS).

This sequence belongs to the SNF7 family. As to quaternary structure, probable core component of the endosomal sorting required for transport complex III (ESCRT-III). ESCRT-III components are thought to multimerize to form a flat lattice on the perimeter membrane of the endosome. Several assembly forms of ESCRT-III may exist that interact and act sequentially.

The protein resides in the cytoplasm. It is found in the cytosol. Its subcellular location is the membrane. The protein localises to the endosome. It localises to the late endosome membrane. Probable core component of the endosomal sorting required for transport complex III (ESCRT-III) which is involved in multivesicular bodies (MVBs) formation and sorting of endosomal cargo proteins into MVBs. MVBs contain intraluminal vesicles (ILVs) that are generated by invagination and scission from the limiting membrane of the endosome and mostly are delivered to lysosomes enabling degradation of membrane proteins, such as stimulated growth factor receptors, lysosomal enzymes and lipids. Involved in late stages of cytokinesis. Plays a role in endosomal sorting/trafficking of EGF receptor. This is Charged multivesicular body protein 3 (chmp3) from Danio rerio (Zebrafish).